The primary structure comprises 230 residues: Cytidylate kinase (230 aa).

12–20 lines the ATP pocket; it reads GPSGAGKGT.

The protein belongs to the cytidylate kinase family. Type 1 subfamily.

Its subcellular location is the cytoplasm. It catalyses the reaction CMP + ATP = CDP + ADP. The enzyme catalyses dCMP + ATP = dCDP + ADP. The protein is Cytidylate kinase of Shewanella loihica (strain ATCC BAA-1088 / PV-4).